Here is a 313-residue protein sequence, read N- to C-terminus: D-alanine--D-alanine ligase (313 aa).

Residues 108 to 308 (KLVWQQTGVP…YSELVVKVLA (201 aa)) form the ATP-grasp domain. 138–193 (VAKLGLPLFVKPASEGSSVAVLKVKTADALPAALSEAATHDKIVIVEKSIEGGGEY) contributes to the ATP binding site. Residues aspartate 262, glutamate 275, and asparagine 277 each contribute to the Mg(2+) site.

Belongs to the D-alanine--D-alanine ligase family. It depends on Mg(2+) as a cofactor. Mn(2+) serves as cofactor.

The protein resides in the cytoplasm. It catalyses the reaction 2 D-alanine + ATP = D-alanyl-D-alanine + ADP + phosphate + H(+). Its pathway is cell wall biogenesis; peptidoglycan biosynthesis. Cell wall formation. The sequence is that of D-alanine--D-alanine ligase from Burkholderia ambifaria (strain ATCC BAA-244 / DSM 16087 / CCUG 44356 / LMG 19182 / AMMD) (Burkholderia cepacia (strain AMMD)).